The following is a 438-amino-acid chain: Methylenetetrahydrofolate--tRNA-(uracil-5-)-methyltransferase TrmFO (438 aa).

Residue G9–G14 participates in FAD binding.

The protein belongs to the MnmG family. TrmFO subfamily. FAD serves as cofactor.

It localises to the cytoplasm. It carries out the reaction uridine(54) in tRNA + (6R)-5,10-methylene-5,6,7,8-tetrahydrofolate + NADH + H(+) = 5-methyluridine(54) in tRNA + (6S)-5,6,7,8-tetrahydrofolate + NAD(+). The catalysed reaction is uridine(54) in tRNA + (6R)-5,10-methylene-5,6,7,8-tetrahydrofolate + NADPH + H(+) = 5-methyluridine(54) in tRNA + (6S)-5,6,7,8-tetrahydrofolate + NADP(+). Functionally, catalyzes the folate-dependent formation of 5-methyl-uridine at position 54 (M-5-U54) in all tRNAs. In Lactobacillus gasseri (strain ATCC 33323 / DSM 20243 / BCRC 14619 / CIP 102991 / JCM 1131 / KCTC 3163 / NCIMB 11718 / NCTC 13722 / AM63), this protein is Methylenetetrahydrofolate--tRNA-(uracil-5-)-methyltransferase TrmFO.